Consider the following 556-residue polypeptide: Arginine--tRNA ligase (556 aa).

Residues 132-142 carry the 'HIGH' region motif; the sequence is ANPTGDLHLGH.

Belongs to the class-I aminoacyl-tRNA synthetase family. In terms of assembly, monomer.

It localises to the cytoplasm. The catalysed reaction is tRNA(Arg) + L-arginine + ATP = L-arginyl-tRNA(Arg) + AMP + diphosphate. This is Arginine--tRNA ligase from Listeria monocytogenes serotype 4b (strain F2365).